A 116-amino-acid polypeptide reads, in one-letter code: Translation initiation factor 1A (116 aa).

The interval 1-25 (MRCLSKKHQKQGDEHGGEIPLPNPD) is disordered. One can recognise an S1-like domain in the interval 17–91 (GEIPLPNPDE…EKGEVVYKYG (75 aa)).

This sequence belongs to the eIF-1A family.

In terms of biological role, seems to be required for maximal rate of protein biosynthesis. Enhances ribosome dissociation into subunits and stabilizes the binding of the initiator Met-tRNA(I) to 40 S ribosomal subunits. The chain is Translation initiation factor 1A (eIF1A) from Desulfurococcus amylolyticus (strain DSM 18924 / JCM 16383 / VKM B-2413 / 1221n) (Desulfurococcus kamchatkensis).